The following is a 1012-amino-acid chain: Autotransporter adhesin BpaC (1012 aa).

Residues 1 to 71 (MNRIFKSIWC…PFAEEAMAAN (71 aa)) form the signal peptide. The surface exposed passenger domain stretch occupies residues 72–921 (NAGVCLTYNG…VGQLNSAVSG (850 aa)). Disordered stretches follow at residues 420–746 (GLQG…AGAT) and 785–809 (ENST…ESAA). Residues 427-442 (ANTGTASGDNSTASGD) are compositionally biased toward polar residues. The span at 443 to 504 (NATASGTNST…ANGTNSTASG (62 aa)) shows a compositional bias: low complexity. Residues 505-519 (DNSTASGTNASATGE) are compositionally biased toward polar residues. Residues 520 to 588 (NSTATGTDST…ANGTNSTASG (69 aa)) are compositionally biased toward low complexity. A compositionally biased stretch (polar residues) spans 589–603 (DNSTASGTNASATGE). Over residues 604–630 (NSTATGTDSTASGSNSTANGTNSTASG) the composition is skewed to low complexity. The span at 631–645 (DNSTASGTNASATGE) shows a compositional bias: polar residues. Composition is skewed to low complexity over residues 646–700 (NSTA…TASG) and 708–746 (TNAS…AGAT). Residues 922–959 (IRNQMDGMQGQIDTLARDAYSGIAAATALTMIPDVDPG) form an outer membrane translocation of the passenger domain region. The tract at residues 960–1012 (KTLAVGIGTANFKGYQASALGATARITQNLKVKTGVSYSGSNYVWGAGMSYQW) is translocator domain.

Belongs to the autotransporter-2 (AT-2) (TC 1.B.40) family. Homotrimer.

Its subcellular location is the cell surface. It is found in the cell outer membrane. Its function is as follows. Involved in virulence. Mediates adherence to human respiratory epithelial cells. This Burkholderia mallei (strain ATCC 23344) protein is Autotransporter adhesin BpaC.